A 634-amino-acid polypeptide reads, in one-letter code: Chaperone protein HtpG (634 aa).

An a; substrate-binding region spans residues 1–342 (MTVDTDKQTL…SSDLSLNVSR (342 aa)). Residues 343-559 (EILQSGPVVD…QGDLGLQMRQ (217 aa)) are b. The segment at 560-634 (LLEASGQAVP…LNKLLLELSV (75 aa)) is c.

The protein belongs to the heat shock protein 90 family. In terms of assembly, homodimer.

It localises to the cytoplasm. In terms of biological role, molecular chaperone. Has ATPase activity. The sequence is that of Chaperone protein HtpG from Xanthomonas oryzae pv. oryzae (strain MAFF 311018).